The chain runs to 310 residues: ADP-L-glycero-D-manno-heptose-6-epimerase (310 aa).

Residues 10–11 (FI), 31–32 (DN), K38, K53, 75–79 (EGACS), and N92 contribute to the NADP(+) site. Y140 acts as the Proton acceptor in catalysis. NADP(+) is bound at residue K144. N169 is a binding site for substrate. The NADP(+) site is built by V170 and K178. K178 (proton acceptor) is an active-site residue. Substrate contacts are provided by residues S180, H187, 201–204 (FEGS), and R209. N6-acetyllysine is present on K267. Residue Y272 participates in substrate binding.

The protein belongs to the NAD(P)-dependent epimerase/dehydratase family. HldD subfamily. Homopentamer. NADP(+) is required as a cofactor.

The enzyme catalyses ADP-D-glycero-beta-D-manno-heptose = ADP-L-glycero-beta-D-manno-heptose. It functions in the pathway nucleotide-sugar biosynthesis; ADP-L-glycero-beta-D-manno-heptose biosynthesis; ADP-L-glycero-beta-D-manno-heptose from D-glycero-beta-D-manno-heptose 7-phosphate: step 4/4. In terms of biological role, catalyzes the interconversion between ADP-D-glycero-beta-D-manno-heptose and ADP-L-glycero-beta-D-manno-heptose via an epimerization at carbon 6 of the heptose. In Escherichia coli (strain ATCC 8739 / DSM 1576 / NBRC 3972 / NCIMB 8545 / WDCM 00012 / Crooks), this protein is ADP-L-glycero-D-manno-heptose-6-epimerase.